The sequence spans 676 residues: Methionine--tRNA ligase (676 aa).

The 'HIGH' region signature appears at 15-25 (PYANGPIHLGH). Residues cysteine 146, cysteine 149, cysteine 159, and cysteine 162 each coordinate Zn(2+). A 'KMSKS' region motif is present at residues 332-336 (KMSKS). Lysine 335 is a binding site for ATP. A tRNA-binding domain is found at 575-676 (DFAKIDLRIA…EGAQPGMRVK (102 aa)).

Belongs to the class-I aminoacyl-tRNA synthetase family. MetG type 1 subfamily. In terms of assembly, homodimer. Requires Zn(2+) as cofactor.

It is found in the cytoplasm. It carries out the reaction tRNA(Met) + L-methionine + ATP = L-methionyl-tRNA(Met) + AMP + diphosphate. Is required not only for elongation of protein synthesis but also for the initiation of all mRNA translation through initiator tRNA(fMet) aminoacylation. The polypeptide is Methionine--tRNA ligase (Shewanella sp. (strain MR-4)).